Here is a 549-residue protein sequence, read N- to C-terminus: Beta-hexosaminidase Amuc_0868 (549 aa).

An N-terminal signal peptide occupies residues 1-28 (MISKCTFSATVFSLFSLCWGAPSSPVLE). A substrate-binding site is contributed by arginine 161. Residues aspartate 190 and histidine 260 each act as charge relay system in the active site. A substrate-binding site is contributed by aspartate 326. Residue glutamate 327 is the Charge relay system of the active site. Residues tryptophan 393, 420 to 422 (YFD), and 474 to 476 (WTE) contribute to the substrate site. The tract at residues 526-549 (GVNYKRPDNGAPAQPKAVITRERR) is disordered.

It belongs to the glycosyl hydrolase 20 family.

The enzyme catalyses Hydrolysis of terminal non-reducing N-acetyl-D-hexosamine residues in N-acetyl-beta-D-hexosaminides.. With respect to regulation, inhibited strongly by Cu(2+), Zn(2+), Cd(2+) and Ni(2+) ions. No effect on activity with Na(+), Li(+), K(+), Ca(2+), Mg(2+) or Mn(2+) ions. Potentially capable of cleaving the specific glycoside linkages in the process of mucin degradation in human intestinal tract. Hydrolyzes chromogenic substrates pNP-beta-GlcNAc with high activity and pNP-beta-GalNAc to a lesser extent, but not pNP-beta-glucose or pNP-beta-galactose. The protein is Beta-hexosaminidase Amuc_0868 of Akkermansia muciniphila (strain ATCC BAA-835 / DSM 22959 / JCM 33894 / BCRC 81048 / CCUG 64013 / CIP 107961 / Muc).